A 302-amino-acid polypeptide reads, in one-letter code: Sulfate adenylyltransferase subunit 2 (302 aa).

The protein belongs to the PAPS reductase family. CysD subfamily. Heterodimer composed of CysD, the smaller subunit, and CysN.

The enzyme catalyses sulfate + ATP + H(+) = adenosine 5'-phosphosulfate + diphosphate. The protein operates within sulfur metabolism; hydrogen sulfide biosynthesis; sulfite from sulfate: step 1/3. Its function is as follows. With CysN forms the ATP sulfurylase (ATPS) that catalyzes the adenylation of sulfate producing adenosine 5'-phosphosulfate (APS) and diphosphate, the first enzymatic step in sulfur assimilation pathway. APS synthesis involves the formation of a high-energy phosphoric-sulfuric acid anhydride bond driven by GTP hydrolysis by CysN coupled to ATP hydrolysis by CysD. This Escherichia coli O1:K1 / APEC protein is Sulfate adenylyltransferase subunit 2.